Consider the following 861-residue polypeptide: MEALGPGPPASLFQPPRRPGLGTVGKPIRLLANHFQVQIPKIDVYHYDVDIKPEKRPRRVNREVVDTMVRHFKMQIFGDRQPGYDGKRNMYTAHPLPIGRDRVDMEVTLPGEGKDQTFKVSVQWVSVVSLQLLLEALAGHLNEVPDDSVQALDVITRHLPSMRYTPVGRSFFSPPEGYYHPLGGGREVWFGFHQSVRPAMWNMMLNIDVSATAFYRAQPIIEFMCEVLDIQNINEQTKPLTDSQRVKFTKEIRGLKVEVTHCGQMKRKYRVCNVTRRPASHQTFPLQLENGQAMECTVAQYFKQKYSLQLKYPHLPCLQVGQEQKHTYLPLEVCNIVAGQRCIKKLTDNQTSTMIKATARSAPDRQEEISRLVKSNSMVGGPDPYLKEFGIVVHNEMTELTGRVLPAPMLQYGGRNKTVATPNQGVWDMRGKQFYAGIEIKVWAVACFAPQKQCREDLLKSFTDQLRKISKDAGMPIQGQPCFCKYAQGADSVEPMFKHLKMTYVGLQLIVVILPGKTPVYAEVKRVGDTLLGMATQCVQVKNVVKTSPQTLSNLCLKINAKLGGINNVLVPHQRPSVFQQPVIFLGADVTHPPAGDGKKPSIAAVVGSMDGHPSRYCATVRVQTSRQEISQELLYSQEVIQDLTNMVRELLIQFYKSTRFKPTRIIYYRGGVSEGQMKQVAWPELIAIRKACISLEEDYRPGITYIVVQKRHHTRLFCADKTERVGKSGNVPAGTTVDSTITHPSEFDFYLCSHAGIQGTSRPSHYQVLWDDNCFTADELQLLTYQLCHTYVRCTRSVSIPAPAYYARLVAFRARYHLVDKDHDSAEGSHVSGQSNGRDPQALAKAVQIHHDTQHTMYFA.

A PAZ domain is found at 219–338; sequence PIIEFMCEVL…LPLEVCNIVA (120 aa). In terms of domain architecture, Piwi spans 509–820; sequence LIVVILPGKT…VAFRARYHLV (312 aa). Residues 825–846 form a disordered region; the sequence is DSAEGSHVSGQSNGRDPQALAK.

The protein belongs to the argonaute family. Ago subfamily. In terms of assembly, interacts with EIF4B, IMP8, PRMT5, TNRC6A and TNRC6B. Interacts with ZFP36. Post-translationally, ubiquitinated on surface-exposed lysines by a SCF-like E3 ubiquitin-protein ligase complex containing ZSWIM8 during target-directed microRNA degradation (TDMD), a process that mediates degradation of microRNAs (miRNAs). Ubiquitination by the SCF-like E3 ubiquitin-protein ligase complex containing ZSWIM8 leads to its subsequent degradation, thereby exposing miRNAs for degradation. ZSWIM8 recognizes and binds AGO4 when it is engaged with a TDMD target.

The protein resides in the cytoplasm. Its subcellular location is the P-body. In terms of biological role, required for RNA-mediated gene silencing (RNAi). Binds to short RNAs such as microRNAs (miRNAs) and represses the translation of mRNAs which are complementary to them. Lacks endonuclease activity and does not appear to cleave target mRNAs. Also required for RNA-directed transcription and replication of the human hapatitis delta virus (HDV). The polypeptide is Protein argonaute-4 (AGO4) (Homo sapiens (Human)).